A 147-amino-acid chain; its full sequence is Large ribosomal subunit protein bL9 (147 aa).

It belongs to the bacterial ribosomal protein bL9 family.

In terms of biological role, binds to the 23S rRNA. The polypeptide is Large ribosomal subunit protein bL9 (Cytophaga hutchinsonii (strain ATCC 33406 / DSM 1761 / CIP 103989 / NBRC 15051 / NCIMB 9469 / D465)).